Here is a 165-residue protein sequence, read N- to C-terminus: Transcription antitermination protein NusB (165 aa).

Positions 139 to 165 (EAVRSHRRNKRPAADKPVATDKPAAAE) are disordered.

The protein belongs to the NusB family.

In terms of biological role, involved in transcription antitermination. Required for transcription of ribosomal RNA (rRNA) genes. Binds specifically to the boxA antiterminator sequence of the ribosomal RNA (rrn) operons. This chain is Transcription antitermination protein NusB, found in Laribacter hongkongensis (strain HLHK9).